A 199-amino-acid polypeptide reads, in one-letter code: Probable GTP-binding protein EngB (199 aa).

The EngB-type G domain maps to I25–R199. Mg(2+)-binding residues include S40 and T62.

Belongs to the TRAFAC class TrmE-Era-EngA-EngB-Septin-like GTPase superfamily. EngB GTPase family. The cofactor is Mg(2+).

Its function is as follows. Necessary for normal cell division and for the maintenance of normal septation. The protein is Probable GTP-binding protein EngB of Blochmanniella pennsylvanica (strain BPEN).